The sequence spans 275 residues: 4-diphosphocytidyl-2-C-methyl-D-erythritol kinase (275 aa).

Lysine 9 is a catalytic residue. Position 90-100 (90-100) interacts with ATP; sequence PVGGGLGGGSS. Aspartate 132 is an active-site residue.

The protein belongs to the GHMP kinase family. IspE subfamily.

It carries out the reaction 4-CDP-2-C-methyl-D-erythritol + ATP = 4-CDP-2-C-methyl-D-erythritol 2-phosphate + ADP + H(+). It functions in the pathway isoprenoid biosynthesis; isopentenyl diphosphate biosynthesis via DXP pathway; isopentenyl diphosphate from 1-deoxy-D-xylulose 5-phosphate: step 3/6. Functionally, catalyzes the phosphorylation of the position 2 hydroxy group of 4-diphosphocytidyl-2C-methyl-D-erythritol. The sequence is that of 4-diphosphocytidyl-2-C-methyl-D-erythritol kinase from Sulfurihydrogenibium sp. (strain YO3AOP1).